The chain runs to 239 residues: Ribosomal RNA small subunit methyltransferase G (239 aa).

Residues Gly-77, Phe-82, 128 to 129, and Arg-147 contribute to the S-adenosyl-L-methionine site; that span reads AE.

It belongs to the methyltransferase superfamily. RNA methyltransferase RsmG family.

Its subcellular location is the cytoplasm. Functionally, specifically methylates the N7 position of guanine in position 535 of 16S rRNA. This Bacillus cereus (strain G9842) protein is Ribosomal RNA small subunit methyltransferase G.